The following is a 173-amino-acid chain: Alpha-crystallin A chain (173 aa).

Residue Met1 is modified to N-acetylmethionine. Residues 1-63 (MDIAIQHPWF…RSVLDSGISE (63 aa)) are required for complex formation with BFSP1 and BFSP2. Gln6 bears the Deamidated glutamine; partial mark. At Ser45 the chain carries Phosphoserine. A Deamidated glutamine; partial modification is found at Gln50. The sHSP domain maps to 52–162 (LFRSVLDSGI…GHSERAIPVS (111 aa)). Residue Lys70 is modified to N6-acetyllysine. Deamidated glutamine; partial is present on Gln90. At Lys99 the chain carries N6-acetyllysine. His100 is a Zn(2+) binding site. Asn101 is modified (deamidated asparagine; partial). The Zn(2+) site is built by Glu102 and His107. Residue Ser122 is modified to Phosphoserine. Asn123 is subject to Deamidated asparagine; partial. The disordered stretch occupies residues 144–173 (PKVTSGMDAGHSERAIPVSREEKPSSAPSS). Residues 153-167 (GHSERAIPVSREEKP) are compositionally biased toward basic and acidic residues. His154 contacts Zn(2+). Residue Ser162 is glycosylated (O-linked (GlcNAc) serine).

This sequence belongs to the small heat shock protein (HSP20) family. Heteromer composed of three CRYAA and one CRYAB subunits. Inter-subunit bridging via zinc ions enhances stability, which is crucial as there is no protein turn over in the lens. Can also form homodimers and homotetramers (dimers of dimers) which serve as the building blocks of homooligomers. Within homooligomers, the zinc-binding motif is created from residues of 3 different molecules. His-100 and Glu-102 from one molecule are ligands of the zinc ion, and His-107 and His-154 residues from additional molecules complete the site with tetrahedral coordination geometry. Part of a complex required for lens intermediate filament formation composed of BFSP1, BFSP2 and CRYAA. Acetylation at Lys-70 may increase chaperone activity. Post-translationally, undergoes age-dependent proteolytical cleavage at the C-terminus.

It is found in the cytoplasm. Its subcellular location is the nucleus. In terms of biological role, contributes to the transparency and refractive index of the lens. Acts as a chaperone, preventing aggregation of various proteins under a wide range of stress conditions. Required for the correct formation of lens intermediate filaments as part of a complex composed of BFSP1, BFSP2 and CRYAA. This is Alpha-crystallin A chain (CRYAA) from Phocoena phocoena (Harbor porpoise).